We begin with the raw amino-acid sequence, 1113 residues long: Protein KIBRA (1113 aa).

WW domains lie at 6–39 (LPLPEGWEEARDFDGKVYYIDHTNRTTSWIDPRD) and 53–86 (DELPLGWEEAYDPQVGDYFIDHNTKTTQIEDPRV). 2 coiled-coil regions span residues 107 to 193 (LSAQ…RGFQ) and 293 to 431 (NSNN…SSMQ). Position 141 is a phosphoserine (S141). 2 disordered regions span residues 429-448 (SMQSLSSGSSPGSLTSSRGS) and 522-547 (RSLSGTPKSMTSLSPRSSLSSPSPPC). The span at 522–532 (RSLSGTPKSMT) shows a compositional bias: polar residues. The span at 533-542 (SLSPRSSLSS) shows a compositional bias: low complexity. S535 is modified (phosphoserine). S542 is modified (phosphoserine; by CDK1). A C2 domain is found at 658 to 781 (GATRIQIALK…RSGERSTRWY (124 aa)). Residues 825–975 (LEKRQEGRSS…RSVRMKRPSS (151 aa)) are disordered. The segment at 839-1113 (EDSWRYEETS…NIPALSADDV (275 aa)) is interaction with histone H3. Residues 847–870 (TSENEAVAEEEEEEVEEEEGEEDV) are compositionally biased toward acidic residues. S899 is subject to Phosphoserine. T912 is modified (phosphothreonine). The segment covering 924-938 (IIRSKTFSPGPQSQY) has biased composition (polar residues). Phosphoserine is present on S927. T929 is modified (phosphothreonine). Phosphoserine; by CDK1 is present on S931. A Phosphoserine modification is found at S947. 2 interaction with PRKCZ regions span residues 953–996 (SKKP…LDLQ) and 956–975 (PPFVRNSLERRSVRMKRPSS). A phosphoserine; by PKC/PRKCZ mark is found at S975 and S978. A coiled-coil region spans residues 1001–1032 (WHSQLTQEISVLKELKEQLEQAKSHGEKELPQ). The ADDV motif signature appears at 1111-1113 (DDV).

The protein belongs to the WWC family. KIBRA subfamily. In terms of assembly, homodimer. Forms heterodimers with WWC2 and WWC3. Interacts with DDN. Interacts with DYNLL1 and histone H3. The interaction with DYNLL1 is mandatory for the recruitment and transactivation functions of ESR1 or DYNLL1 to the target chromatin and the interaction with histone H3 ensures proper regulatory interaction of WWC1-DYNLL1-ESR1 complexes with target chromatin. Interacts (via WW domains) with DDR1 (via PPxY motif) in a collagen-regulated manner. Interacts with PRKCZ (via the protein kinase domain). Forms a tripartite complex with DDR1 and PRKCZ, but predominantly in the absence of collagen. Interacts (via the ADDV motif) with PATJ (via PDZ domain 8). Interacts (via WW domains) with SYNPO (via PPxY motifs). Interacts with NF2 and SNX4. Interacts with DLC1 and PRKCZ. Interacts (via WW domains) with LATS1 and LATS2. Phosphorylation at Ser-542 and Ser-931 by CDK1 in response to spindle damage stress regulates mitotic exit, these two sites are dephosphorylated by CDC14B. As to expression, expressed in mammary epithelial cells and breast cancer cell lines. Found in the luminal epithelium surrounding the ducts in the normal breast. In the brain, expressed in somatodendritic compartment of neurons in the cortex and hippocampus and in the cerebellum it is found in the Purkinje cells and some granule cells (at protein level). Detected in brain, heart, colon and kidney. In the kidney, expressed in glomerular podocytes, in some tubules and in the collecting duct.

The protein localises to the cytoplasm. It is found in the perinuclear region. Its subcellular location is the nucleus. The protein resides in the cell projection. It localises to the ruffle membrane. The protein localises to the cytosol. Functionally, regulator of the Hippo signaling pathway, also known as the Salvador-Warts-Hippo (SWH) pathway. Enhances phosphorylation of LATS1 and YAP1 and negatively regulates cell proliferation and organ growth due to a suppression of the transcriptional activity of YAP1, the major effector of the Hippo pathway. Along with NF2 can synergistically induce the phosphorylation of LATS1 and LATS2 and function in the regulation of Hippo signaling pathway. Acts as a transcriptional coactivator of ESR1 which plays an essential role in DYNLL1-mediated ESR1 transactivation. Regulates collagen-stimulated activation of the ERK/MAPK cascade. Modulates directional migration of podocytes. Plays a role in cognition and memory performance. Plays an important role in regulating AMPA-selective glutamate receptors (AMPARs) trafficking underlying synaptic plasticity and learning. This chain is Protein KIBRA, found in Homo sapiens (Human).